A 548-amino-acid chain; its full sequence is Membrane protein insertase YidC (548 aa).

The helical transmembrane segment at 6 to 26 (NLLVIALLFVSFMIWQAWEQD) threads the bilayer. The tract at residues 28 to 56 (NPQPQTQQTTQTTTTAAGSAADQGVPASG) is disordered. Residues 29 to 42 (PQPQTQQTTQTTTT) are compositionally biased toward low complexity. 4 consecutive transmembrane segments (helical) span residues 350–370 (FVGN…GIMY), 424–444 (FPLI…MGSI), 458–478 (LSAQ…MFFI), and 499–519 (PVIF…YYIV).

It belongs to the OXA1/ALB3/YidC family. Type 1 subfamily. As to quaternary structure, interacts with the Sec translocase complex via SecD. Specifically interacts with transmembrane segments of nascent integral membrane proteins during membrane integration.

The protein localises to the cell inner membrane. Its function is as follows. Required for the insertion and/or proper folding and/or complex formation of integral membrane proteins into the membrane. Involved in integration of membrane proteins that insert both dependently and independently of the Sec translocase complex, as well as at least some lipoproteins. Aids folding of multispanning membrane proteins. The sequence is that of Membrane protein insertase YidC from Salmonella enteritidis PT4 (strain P125109).